Here is a 302-residue protein sequence, read N- to C-terminus: Lipoyl synthase (302 aa).

Cys-54, Cys-59, Cys-65, Cys-80, Cys-84, Cys-87, and Ser-291 together coordinate [4Fe-4S] cluster. The 215-residue stretch at 66-280 (WSRKTATYML…RIYGKSIGFK (215 aa)) folds into the Radical SAM core domain.

It belongs to the radical SAM superfamily. Lipoyl synthase family. It depends on [4Fe-4S] cluster as a cofactor.

It localises to the cytoplasm. The catalysed reaction is [[Fe-S] cluster scaffold protein carrying a second [4Fe-4S](2+) cluster] + N(6)-octanoyl-L-lysyl-[protein] + 2 oxidized [2Fe-2S]-[ferredoxin] + 2 S-adenosyl-L-methionine + 4 H(+) = [[Fe-S] cluster scaffold protein] + N(6)-[(R)-dihydrolipoyl]-L-lysyl-[protein] + 4 Fe(3+) + 2 hydrogen sulfide + 2 5'-deoxyadenosine + 2 L-methionine + 2 reduced [2Fe-2S]-[ferredoxin]. The protein operates within protein modification; protein lipoylation via endogenous pathway; protein N(6)-(lipoyl)lysine from octanoyl-[acyl-carrier-protein]: step 2/2. Its function is as follows. Catalyzes the radical-mediated insertion of two sulfur atoms into the C-6 and C-8 positions of the octanoyl moiety bound to the lipoyl domains of lipoate-dependent enzymes, thereby converting the octanoylated domains into lipoylated derivatives. This is Lipoyl synthase from Leptospira borgpetersenii serovar Hardjo-bovis (strain JB197).